Reading from the N-terminus, the 381-residue chain is Succinyl-diaminopimelate desuccinylase (381 aa).

Residue H71 participates in Zn(2+) binding. D73 is a catalytic residue. D104 is a binding site for Zn(2+). The active-site Proton acceptor is E138. Residues E139, E167, and H353 each contribute to the Zn(2+) site.

The protein belongs to the peptidase M20A family. DapE subfamily. Homodimer. The cofactor is Zn(2+). Co(2+) is required as a cofactor.

The catalysed reaction is N-succinyl-(2S,6S)-2,6-diaminopimelate + H2O = (2S,6S)-2,6-diaminopimelate + succinate. It participates in amino-acid biosynthesis; L-lysine biosynthesis via DAP pathway; LL-2,6-diaminopimelate from (S)-tetrahydrodipicolinate (succinylase route): step 3/3. Functionally, catalyzes the hydrolysis of N-succinyl-L,L-diaminopimelic acid (SDAP), forming succinate and LL-2,6-diaminopimelate (DAP), an intermediate involved in the bacterial biosynthesis of lysine and meso-diaminopimelic acid, an essential component of bacterial cell walls. The sequence is that of Succinyl-diaminopimelate desuccinylase from Shewanella piezotolerans (strain WP3 / JCM 13877).